A 772-amino-acid polypeptide reads, in one-letter code: A type blood N-acetyl-alpha-D-galactosamine deacetylase (772 aa).

The signal sequence occupies residues 1-27 (MRNRRKAVSLLTGLLVTAQLFPTAALA). Residues Ser-87 and His-123 each coordinate substrate. Asp-126 serves as a coordination point for a divalent metal cation. The tract at residues 180 to 402 (WSKPTSDAER…WRIGYAENSF (223 aa)) is deacetylase activity. Position 236 (Tyr-236) interacts with substrate. His-278 contacts a divalent metal cation. The region spanning 494-605 (SDDLEIAVVE…KDLVASGSDW (112 aa)) is the F5/8 type C domain. Positions 502 to 765 (VENPYTLIPQ…VCVSPVVDFD (264 aa)) are CBM32 carbohydrate-binding domain. The interval 515-772 (TATATSVYGG…DFDYFSYVGE (258 aa)) is not required for activity on soluble substrates.

The cofactor is a divalent metal cation.

The catalysed reaction is an N-acetyl-alpha-D-galactosaminyl-(1-&gt;3)-[alpha-L-fucosyl-(1-&gt;2)]-beta-D-galactosyl derivative + H2O = an alpha-D-galactosaminyl-(1-&gt;3)-[alpha-L-fucosyl-(1-&gt;2)]-beta-D-galactosyl derivative + acetate. Inhibited by EDTA. In terms of biological role, one of an enzyme pair that work together to convert the A antigen to the H antigen of the O blood type, which together release galactosamine. Catalyzes the first step in the conversion, generating the substrate for the subsequent enzyme (FpGalNase, AC P0DTR5). Works on many different A antigen subtypes. Glu-90 probably activates a nucleophilic water molecule to start the deacetylation reaction. The polypeptide is A type blood N-acetyl-alpha-D-galactosamine deacetylase (Flavonifractor plautii (Fusobacterium plautii)).